The chain runs to 678 residues: Secretin ExeD (678 aa).

The signal sequence occupies residues 1 to 25; the sequence is MINKGKSWRLATVAAALMMAGSAWA. The tract at residues 26-122 is N0; that stretch reads TEYSASFKNA…VVDETNPGIG (97 aa). The N1 stretch occupies residues 124–188; the sequence is EMVTRVVPVR…EVVRRVDKAG (65 aa). The interval 189 to 264 is N2; that stretch reads DQEVDIIKLR…MVRQLDRDLQ (76 aa). An N3 region spans residues 267–347; it reads GNTRVFYLKY…ELEQVVAKLD (81 aa). The segment at 352 to 602 is secretin; the sequence is QVLVEAIIVE…VFIRPTILRD (251 aa). Residues 604–678 form a s domain region; the sequence is HVYSGISSNK…GAQPFVQGNK (75 aa).

The protein belongs to the bacterial secretin family. GSP D subfamily. Forms a cylindrical channel with 15 subunits.

The protein resides in the cell outer membrane. Its function is as follows. Involved in a type II secretion system (T2SS, formerly general secretion pathway, GSP) for the export of proteins. This subunit forms the outer membrane channel. The polypeptide is Secretin ExeD (exeD) (Aeromonas salmonicida).